The following is a 684-amino-acid chain: MSAQDFLVELGTEELPPKTLVSLADAFLAGIEKGLAGAGLTYSAKQVYAAPRRLAVLITALATQQPDRSVNLDGPPRQAAFDADGNPTQAALGFAKKCGVDLSEIDQSGPKLRYSQTILGKPTTSLLPTIVEDSLNDLPIAKRMRWGARKEEFVRPTQWLVMLFGDQVVDCTILAQSAGRHSRGHRFHHPEDVRISSPAGYLSDLRAANVLADFNERRQIISKRVEELASQQEGTAIVPPSLLDEVAGLVEWPVPLVCSFEERFLDVPQEALITTMQDNQKYFCLLDADGKLLPRFITVANIESKDPAQIIAGNEKVVRPRLTDAEFFFKQDKKQKLETFNDRLKNVVFQAQLGSVFDKAERVSKLAAYIAPRIGGDAQRAARAGLLSKCDLSSEMVGEFPEMQGIAGYYYAKADGEAEDVALALNEQYMPRGAGAELPTTLTGAAVAIADKLDTLVGIFGIGMLPTGSKDPYALRRAALGILRILIEKKLDLNLVETVKFAVTQFGAKVKPAGLAEQVLEFIFDRLRARYEDEGVEVAVYLSVRALQPASALDFDQRVQAVQAFRKLPQAAALAAVNKRVSNLLSKAEGSIAQTVEPKYFDNANEFSLYSAIQQADHAVQPMAAERQYSESLARLAMLREPVDAFFEAVMVNAEDANVRANRYALLARLRGLFLGVADISLLG.

Belongs to the class-II aminoacyl-tRNA synthetase family. As to quaternary structure, tetramer of two alpha and two beta subunits.

The protein localises to the cytoplasm. The enzyme catalyses tRNA(Gly) + glycine + ATP = glycyl-tRNA(Gly) + AMP + diphosphate. The chain is Glycine--tRNA ligase beta subunit from Pseudomonas syringae pv. tomato (strain ATCC BAA-871 / DC3000).